We begin with the raw amino-acid sequence, 241 residues long: Phycocyanobilin:ferredoxin oxidoreductase (241 aa).

It belongs to the HY2 family.

It catalyses the reaction (2R,3Z)-phycocyanobilin + 4 oxidized [2Fe-2S]-[ferredoxin] = biliverdin IXalpha + 4 reduced [2Fe-2S]-[ferredoxin] + 4 H(+). Functionally, catalyzes the four-electron reduction of biliverdin IX-alpha (2-electron reduction at both the A and D rings); the reaction proceeds via an isolatable 2-electron intermediate, 181,182-dihydrobiliverdin. This is Phycocyanobilin:ferredoxin oxidoreductase from Prochlorococcus marinus (strain MIT 9215).